The primary structure comprises 614 residues: Glucosidase 2 subunit beta (614 aa).

Positions 1–20 (MGLHTLLLLLLLRISASAAA) are cleaved as a signal peptide. N115 is a glycosylation site (N-linked (GlcNAc...) asparagine). Composition is skewed to basic and acidic residues over residues 194–222 (EEERLRKEKEEKRMKEEAEKQAADEKKAS), 231–272 (QENH…HDPE), and 324–351 (TGEKVDEVSKDDKNEHEAEHDMPEHSEE). The disordered stretch occupies residues 194–396 (EEERLRKEKE…SHESDDEYVD (203 aa)). Acidic residues predominate over residues 352-364 (THEDESDVPESAE). Basic and acidic residues predominate over residues 372 to 382 (SEVEDDRHKYD). The span at 383-396 (DEDFSHESDDEYVD) shows a compositional bias: acidic residues. Positions 497–592 (DQCFESKEGK…VLSTPALCDE (96 aa)) constitute an MRH domain. 3 cysteine pairs are disulfide-bonded: C499–C512, C549–C578, and C563–C590.

As to quaternary structure, heterodimer of a catalytic alpha subunit and a beta subunit.

The protein resides in the endoplasmic reticulum. It functions in the pathway glycan metabolism; N-glycan metabolism. Regulatory subunit of glucosidase II. May be required for defense response elicited by pathogen-associated molecular patterns (PAMPs). The sequence is that of Glucosidase 2 subunit beta from Oryza sativa subsp. indica (Rice).